A 279-amino-acid chain; its full sequence is Small ribosomal subunit protein uS9m (279 aa).

The protein belongs to the universal ribosomal protein uS9 family.

The protein resides in the mitochondrion. This chain is Small ribosomal subunit protein uS9m (MRPS9), found in Eremothecium gossypii (strain ATCC 10895 / CBS 109.51 / FGSC 9923 / NRRL Y-1056) (Yeast).